The following is a 1148-amino-acid chain: Putative transcription factor SEF1 (1148 aa).

Residues 1-51 are disordered; that stretch reads MVKDNRDSDQDQDFSSAHMKRQPEQQQLQQHQFPSKKQRISHHDDSHQINH. Position 8 is a phosphoserine (S8). Positions 57 to 87 form a DNA-binding region, zn(2)-C6 fungal-type; sequence CTHCRQHKIKCDASQNFPHPCSRCEKIGLHC. The disordered stretch occupies residues 148–180; the sequence is PTPGTIIPNPDSSPSSGSPTSSAAQRDSKVSVQ. The segment covering 150-169 has biased composition (low complexity); that stretch reads PGTIIPNPDSSPSSGSPTSS. At S263 the chain carries Phosphoserine. Positions 524–550 are disordered; sequence EESEEDNNDSIDNNNNDKRNKKDEPHV. Basic and acidic residues predominate over residues 538–550; the sequence is NNDKRNKKDEPHV. A Phosphoserine modification is found at S806. Positions 1029-1050 are enriched in polar residues; the sequence is RSQSSMSHSRTPIASKSNNMTD. A disordered region spans residues 1029 to 1063; sequence RSQSSMSHSRTPIASKSNNMTDLHSVVSDPGSSKS.

The protein resides in the nucleus. Its function is as follows. Putative transcription factor that seems to be involved in the sporulation process. Suppresses the lethal phenotype of RPM2 deletion. The polypeptide is Putative transcription factor SEF1 (SEF1) (Saccharomyces cerevisiae (strain ATCC 204508 / S288c) (Baker's yeast)).